The sequence spans 206 residues: Small ribosomal subunit protein uS4 (206 aa).

An S4 RNA-binding domain is found at 96–156 (TRLDNVVYRM…EKSRTQARIK (61 aa)).

The protein belongs to the universal ribosomal protein uS4 family. As to quaternary structure, part of the 30S ribosomal subunit. Contacts protein S5. The interaction surface between S4 and S5 is involved in control of translational fidelity.

One of the primary rRNA binding proteins, it binds directly to 16S rRNA where it nucleates assembly of the body of the 30S subunit. Functionally, with S5 and S12 plays an important role in translational accuracy. This chain is Small ribosomal subunit protein uS4, found in Shewanella sp. (strain ANA-3).